Reading from the N-terminus, the 357-residue chain is DNA replication and repair protein RecF (357 aa).

30–37 (GANGSGKT) serves as a coordination point for ATP.

Belongs to the RecF family.

Its subcellular location is the cytoplasm. Its function is as follows. The RecF protein is involved in DNA metabolism; it is required for DNA replication and normal SOS inducibility. RecF binds preferentially to single-stranded, linear DNA. It also seems to bind ATP. The protein is DNA replication and repair protein RecF of Escherichia coli O6:K15:H31 (strain 536 / UPEC).